We begin with the raw amino-acid sequence, 99 residues long: Signal recognition particle 19 kDa protein (99 aa).

It belongs to the SRP19 family. As to quaternary structure, part of the signal recognition particle protein translocation system, which is composed of SRP and FtsY. Archaeal SRP consists of a 7S RNA molecule of 300 nucleotides and two protein subunits: SRP54 and SRP19.

The protein localises to the cytoplasm. In terms of biological role, involved in targeting and insertion of nascent membrane proteins into the cytoplasmic membrane. Binds directly to 7S RNA and mediates binding of the 54 kDa subunit of the SRP. The sequence is that of Signal recognition particle 19 kDa protein from Pyrococcus horikoshii (strain ATCC 700860 / DSM 12428 / JCM 9974 / NBRC 100139 / OT-3).